Consider the following 466-residue polypeptide: GTP cyclohydrolase 1 (466 aa).

Zn(2+) is bound by residues cysteine 342, histidine 345, and cysteine 416.

It belongs to the GTP cyclohydrolase I family. In terms of assembly, homodimer.

The enzyme catalyses GTP + H2O = 7,8-dihydroneopterin 3'-triphosphate + formate + H(+). It functions in the pathway cofactor biosynthesis; 7,8-dihydroneopterin triphosphate biosynthesis; 7,8-dihydroneopterin triphosphate from GTP: step 1/1. Functionally, GTP cyclohydrolase 1 is the first enzyme in the biosynthetic pathway leading to folic acid. This chain is GTP cyclohydrolase 1 (GCH1), found in Arabidopsis thaliana (Mouse-ear cress).